A 536-amino-acid polypeptide reads, in one-letter code: Mitogen-activated protein kinase kinase kinase mom-4 (536 aa).

Low complexity predominate over residues 1 to 20; sequence MDNSSQSKPSSSSSSHSPSP. Residues 1–34 are disordered; that stretch reads MDNSSQSKPSSSSSSHSPSPAAITPTQRTTRDSG. Residues 51–305 form the Protein kinase domain; the sequence is NLNSHYLGKG…SSECVEYFTL (255 aa). Residues 57–65 and Lys-84 each bind ATP; that span reads LGKGTYGLV. The active-site Proton acceptor is the Asp-176. The interval 314-438 is disordered; the sequence is SVPLSDSSTN…EHRRDSNDEE (125 aa). Composition is skewed to polar residues over residues 315 to 325 and 350 to 366; these read VPLSDSSTNGP and NNRTPTASKLLNPQQPG. The span at 405 to 438 shows a compositional bias: basic and acidic residues; sequence KNFRDRAKSEQRQPHRDARPPPPFEHRRDSNDEE.

Belongs to the protein kinase superfamily. STE Ser/Thr protein kinase family. MAP kinase kinase kinase subfamily. As to quaternary structure, interacts with, and is activated by, tap-1. Requires Mg(2+) as cofactor. May be autophosphorylated.

It catalyses the reaction L-seryl-[protein] + ATP = O-phospho-L-seryl-[protein] + ADP + H(+). The enzyme catalyses L-threonyl-[protein] + ATP = O-phospho-L-threonyl-[protein] + ADP + H(+). Part of the Wnt signaling pathway essential for the specification of the mesodermal cell fate in early embryos. Stimulates the wrm-1/lit-1-dependent phosphorylation of pop-1 and plays a role in the initial nuclear accumulation of wrm-1. In Caenorhabditis elegans, this protein is Mitogen-activated protein kinase kinase kinase mom-4.